The chain runs to 388 residues: Succinate--CoA ligase [ADP-forming] subunit beta (388 aa).

The region spanning Lys-9–Gln-244 is the ATP-grasp domain. ATP contacts are provided by residues Lys-46, Gly-53–Gly-55, Glu-99, Thr-102, and Glu-107. The Mg(2+) site is built by Asn-199 and Asp-213. Residues Asn-264 and Gly-321–Val-323 contribute to the substrate site.

The protein belongs to the succinate/malate CoA ligase beta subunit family. In terms of assembly, heterotetramer of two alpha and two beta subunits. Mg(2+) serves as cofactor.

The catalysed reaction is succinate + ATP + CoA = succinyl-CoA + ADP + phosphate. It catalyses the reaction GTP + succinate + CoA = succinyl-CoA + GDP + phosphate. The protein operates within carbohydrate metabolism; tricarboxylic acid cycle; succinate from succinyl-CoA (ligase route): step 1/1. In terms of biological role, succinyl-CoA synthetase functions in the citric acid cycle (TCA), coupling the hydrolysis of succinyl-CoA to the synthesis of either ATP or GTP and thus represents the only step of substrate-level phosphorylation in the TCA. The beta subunit provides nucleotide specificity of the enzyme and binds the substrate succinate, while the binding sites for coenzyme A and phosphate are found in the alpha subunit. This is Succinate--CoA ligase [ADP-forming] subunit beta from Shigella flexneri serotype 5b (strain 8401).